We begin with the raw amino-acid sequence, 616 residues long: MCGIIGYSGPRPAAEVLLKGLERLEYRGYDSAGIAVVTDKAYIESVKKSGKLNVLKTCLERRTTPIVGSTGIGHTRWATHGEPSDRNAHPHMDTEQSLAIVHNGIIENSDVLKRELLASGKSFTSETDTEVVAHLLSDAFKKTQDLVQAFVEVTQRLEGAFAVVAIHKDQPNTIVAAKNNSPLLLGFGQGENFLASDIAAFAEYTQRVANIDQERIVALSGDSVYITDFAGHPVDYEVHTVSWHPASVDSSGWSSFMLKEIFEEPQAVENTLKGRTEDGTVILPECDHIRDDLLAIDRVVLVGCGTAAYAAMTASYSIEAWAGLPVSVELSHEFRYREPVLNSKTLAVFISQSGETMDSLMAVRYARQAGVKTISVCNVMDSSIPKESHAVIYTKAGPEVAVASTKSFVCQIVVLYLLALYLGQLRGFRSIFPRQKAVCELNRLPVKLKQVLEIYESVRQLAHWMSDSRSILFLGRHAGYPIALEAALKLKELAYIHAEGFAAGELKHGPIALIEPGQPVFVIVPSPVGSPILHAKVISNIREIKSRGARIIAIAAEGDSAVLPHTDSVLRIPLTRYSFEPLLSIVPLQIFALELAADKGFDVDRPRNLAKSVTVE.

Cys-2 serves as the catalytic Nucleophile; for GATase activity. The Glutamine amidotransferase type-2 domain maps to 2 to 222 (CGIIGYSGPR…QERIVALSGD (221 aa)). Residues 70-89 (TGIGHTRWATHGEPSDRNAH) form a disordered region. 2 consecutive SIS domains span residues 289–428 (IRDD…LRGF) and 461–606 (LAHW…VDRP). The active-site For Fru-6P isomerization activity is the Lys-611.

Homodimer.

Its subcellular location is the cytoplasm. The enzyme catalyses D-fructose 6-phosphate + L-glutamine = D-glucosamine 6-phosphate + L-glutamate. Catalyzes the first step in hexosamine metabolism, converting fructose-6P into glucosamine-6P using glutamine as a nitrogen source. The protein is Glutamine--fructose-6-phosphate aminotransferase [isomerizing] of Tropheryma whipplei (strain Twist) (Whipple's bacillus).